A 446-amino-acid chain; its full sequence is Putrescine N-hydroxylase (446 aa).

The FAD site is built by Phe-17, Asp-37, Ser-38, Lys-39, Trp-44, and His-45. Thr-54, Gln-56, and Arg-98 together coordinate NADP(+). Gln-56 is a binding site for FAD. Residue Val-121 coordinates FAD. NADP(+) contacts are provided by Ser-199, Lys-223, Tyr-267, and Leu-301. FAD contacts are provided by Asn-378, Pro-389, and Leu-391.

This sequence belongs to the lysine N(6)-hydroxylase/L-ornithine N(5)-oxygenase family. In terms of assembly, homotetramer. The cofactor is FAD.

It carries out the reaction putrescine + NADPH + O2 = N-hydroxyputrescine + NADP(+) + H2O. It participates in siderophore biosynthesis. Its function is as follows. N-hydroxylating monooxygenase involved in the biosynthesis of fimsbactin A, the major siderophore produced by A.baumannii. Catalyzes the N-hydroxylation of the aliphatic diamine putrescine into N-hydroxyputrescine (NHP). Putrescine is the preferred substrate, but the enzyme can also catalyze the N-hydroxylation of cadaverine, with 4-fold lower catalytic efficiency. Cannot use lysine or ornithine as substrates. Uses both NADPH and NADH as the reducing cofactor with a preference for NADPH. This is Putrescine N-hydroxylase from Acinetobacter baumannii (strain ATCC 17978 / DSM 105126 / CIP 53.77 / LMG 1025 / NCDC KC755 / 5377).